Consider the following 54-residue polypeptide: Large ribosomal subunit protein bL33 (54 aa).

The protein belongs to the bacterial ribosomal protein bL33 family.

The protein is Large ribosomal subunit protein bL33 of Corynebacterium glutamicum (strain R).